We begin with the raw amino-acid sequence, 595 residues long: MTGASLALTASVVAHAYYLKNQFYPTVVYLTKSSPSMAILYIQAFVLVFLLGKFMGKVFFGQLRAAEMEHLLERSWYAVTETCLAFTVFRDDFSPRFVALFTLLLFLKCFHWLAEDRVDFMERSPNISWLFHFRILALMLLLGVLDAFFVSHAYNSLVTRGASVQLVFGFEYAILMTMILAVFIKYILHSVDLQSENPWDNKAVYMLYTELFTGFIKVLLYMAFMTIMVKVHTFPLFAIRPMYLAMRQFKKAVTDAVMSRRAIRNMNTLYPDATAEELQAMDNVCIICREEMVSGAKRLPCNHIFHTSCLRSWFQRQQTCPTCRMDVLRASLPTQPQTPAEQQNQHQAQQQPTPVVPPQPNFPPGMLPPFPPGMFPLWPPMGQFPPVPGAPVGNPPDEANPGSSSGSSARAGETSNVGSESHPGAALPGFPFPPPFLGMSILPPFGLPPMPMPPAGFAGLTDEELRAMEGHERQNLEARLQCLQNIHTLLDAAMLQINQYLTVLASIGPPQPPVSSSSSSSASASTEPTTSSVSEPVIDTSSIVTTDSSQQSASPVPVNVETLGGAEGGETPTEEPDNVELRRRRLQKLETTDSQ.

A helical transmembrane segment spans residues 1 to 19; sequence MTGASLALTASVVAHAYYL. Residues 20-35 are Lumenal-facing; that stretch reads KNQFYPTVVYLTKSSP. A helical transmembrane segment spans residues 36–56; the sequence is SMAILYIQAFVLVFLLGKFMG. At 57-92 the chain is on the cytoplasmic side; that stretch reads KVFFGQLRAAEMEHLLERSWYAVTETCLAFTVFRDD. Residues 93–113 traverse the membrane as a helical segment; the sequence is FSPRFVALFTLLLFLKCFHWL. Residues 114–129 lie on the Lumenal side of the membrane; it reads AEDRVDFMERSPNISW. The helical transmembrane segment at 130–150 threads the bilayer; it reads LFHFRILALMLLLGVLDAFFV. The Cytoplasmic portion of the chain corresponds to 151–163; sequence SHAYNSLVTRGAS. The chain crosses the membrane as a helical span at residues 164–184; that stretch reads VQLVFGFEYAILMTMILAVFI. Topologically, residues 185–218 are lumenal; sequence KYILHSVDLQSENPWDNKAVYMLYTELFTGFIKV. Residues 219 to 239 traverse the membrane as a helical segment; it reads LLYMAFMTIMVKVHTFPLFAI. An interaction with p53/TP53 region spans residues 230–264; that stretch reads KVHTFPLFAIRPMYLAMRQFKKAVTDAVMSRRAIR. Topologically, residues 240 to 595 are cytoplasmic; the sequence is RPMYLAMRQF…LQKLETTDSQ (356 aa). Residues cysteine 285, cysteine 288, cysteine 301, histidine 303, histidine 306, cysteine 309, cysteine 320, and cysteine 323 each coordinate Zn(2+). The RING-type; atypical zinc finger occupies 285–324; that stretch reads CIICREEMVSGAKRLPCNHIFHTSCLRSWFQRQQTCPTCR. A compositionally biased stretch (low complexity) spans 335–353; it reads QPQTPAEQQNQHQAQQQPT. Disordered stretches follow at residues 335–370 and 386–426; these read QPQT…LPPF and PVPG…PGAA. A compositionally biased stretch (pro residues) spans 354–370; the sequence is PVVPPQPNFPPGMLPPF. Over residues 390-408 the composition is skewed to low complexity; the sequence is APVGNPPDEANPGSSSGSS. The stretch at 463 to 494 forms a coiled coil; sequence EELRAMEGHERQNLEARLQCLQNIHTLLDAAM. The disordered stretch occupies residues 509–595; the sequence is PPQPPVSSSS…LQKLETTDSQ (87 aa). A compositionally biased stretch (low complexity) spans 514 to 552; the sequence is VSSSSSSSASASTEPTTSSVSEPVIDTSSIVTTDSSQQS.

This sequence belongs to the HRD1 family. In terms of assembly, homodimer.

It is found in the endoplasmic reticulum membrane. It carries out the reaction S-ubiquitinyl-[E2 ubiquitin-conjugating enzyme]-L-cysteine + [acceptor protein]-L-lysine = [E2 ubiquitin-conjugating enzyme]-L-cysteine + N(6)-ubiquitinyl-[acceptor protein]-L-lysine.. Its pathway is protein modification; protein ubiquitination. E3 ubiquitin-protein ligase which accepts ubiquitin specifically from endoplasmic reticulum-associated UBC7 E2 ligase and transfers it to substrates, promoting their degradation. Component of the endoplasmic reticulum quality control (ERQC) system also called ER-associated degradation (ERAD) involved in ubiquitin-dependent degradation of misfolded endoplasmic reticulum proteins. Also promotes the degradation of normal but naturally short-lived proteins. Protects cells from ER stress-induced apoptosis. Sequesters p53 in the cytoplasm and promotes its degradation, thereby negatively regulating its biological function in transcription, cell cycle regulation and apoptosis. The protein is E3 ubiquitin-protein ligase synoviolin B (syvn1-b) of Xenopus laevis (African clawed frog).